Here is a 253-residue protein sequence, read N- to C-terminus: Tetraspanin-3 (253 aa).

Residues 1 to 11 (MGQCGITSSKT) lie on the Cytoplasmic side of the membrane. Residues 12 to 32 (VLVFLNLIFWGAAGILCYVGA) form a helical membrane-spanning segment. Residues 33 to 50 (YVFITYDDYDHFFEDVYT) are Extracellular-facing. Residues 51-71 (LIPAVVIIAVGALLFIIGLIG) form a helical membrane-spanning segment. At 72-85 (CCATIRESRCGLAT) the chain is on the cytoplasmic side. Residues 86–106 (FVIILLLVFVTEVVVVVLGYV) form a helical membrane-spanning segment. Over 107 to 212 (YRAKVENEVD…KKLQEIMMHV (106 aa)) the chain is Extracellular. Residues Asn127, Asn152, Asn167, and Asn183 are each glycosylated (N-linked (GlcNAc...) asparagine). The chain crosses the membrane as a helical span at residues 213–233 (IWAALAFAAIQLLGMLCACIV). Topologically, residues 234–253 (LCRRSRDPAYELLITGGTYA) are cytoplasmic.

It belongs to the tetraspanin (TM4SF) family. As to quaternary structure, interacts with claudin-11/CLDN11 and integrins.

Its subcellular location is the membrane. In terms of biological role, regulates the proliferation and migration of oligodendrocytes, a process essential for normal myelination and repair. The chain is Tetraspanin-3 (TSPAN3) from Homo sapiens (Human).